We begin with the raw amino-acid sequence, 201 residues long: Recombination protein RecR (201 aa).

The segment at Cys-57–Cys-72 adopts a C4-type zinc-finger fold. Positions Gly-81–Pro-176 constitute a Toprim domain.

Belongs to the RecR family.

In terms of biological role, may play a role in DNA repair. It seems to be involved in an RecBC-independent recombinational process of DNA repair. It may act with RecF and RecO. The sequence is that of Recombination protein RecR from Yersinia pestis bv. Antiqua (strain Antiqua).